A 107-amino-acid chain; its full sequence is Ferredoxin CarAc (107 aa).

Residues 6–102 (LKVCAASDMQ…VEVKEGEVYV (97 aa)) enclose the Rieske domain. Positions 46, 48, 65, and 68 each coordinate [2Fe-2S] cluster.

As to quaternary structure, monomer. Carbazole 1,9a-dioxygenase complex consists of a terminal oxygenase component CarAa, a ferredoxin reductase component CarAd and a ferredoxin component CarAc. The cofactor is [2Fe-2S] cluster.

Functionally, part of the multicomponent carbazole 1,9a-dioxygenase (CARDO), that converts carbazole (CAR) into 2-aminobiphenyl-2,3-diol. Acts as a mediator in the electron transfer from CarAd to CarAa. This is Ferredoxin CarAc (carAc) from Metapseudomonas resinovorans (Pseudomonas resinovorans).